We begin with the raw amino-acid sequence, 1911 residues long: Protein TIC 214 (1911 aa).

The next 6 helical transmembrane spans lie at 41–61 (IINS…FSIG), 81–103 (ISAT…YAPL), 108–128 (GKPH…FFWN), 147–167 (FNIQ…HFIL), 195–215 (IGWL…LFWI), and 238–258 (IFSI…PLPI). 3 disordered regions span residues 265–299 (ETSE…STEE), 798–817 (DSEE…KEEN), and 1599–1647 (NQNQ…RKKK). The span at 268–297 (ETEESEENEEESDIEITSEPKEQDEEEGST) shows a compositional bias: acidic residues. Composition is skewed to basic and acidic residues over residues 1603–1615 (QEKK…RDLG) and 1623–1635 (QKQK…EKNY).

This sequence belongs to the TIC214 family. As to quaternary structure, part of the Tic complex.

The protein resides in the plastid. It localises to the chloroplast inner membrane. In terms of biological role, involved in protein precursor import into chloroplasts. May be part of an intermediate translocation complex acting as a protein-conducting channel at the inner envelope. The polypeptide is Protein TIC 214 (Lemna minor (Common duckweed)).